The chain runs to 610 residues: Elongation factor 4 (610 aa).

Residues 13 to 195 enclose the tr-type G domain; that stretch reads SHIRNFSIVA…AIVRKLPAPK (183 aa). GTP contacts are provided by residues 25–30 and 142–145; these read DHGKST and NKID.

It belongs to the TRAFAC class translation factor GTPase superfamily. Classic translation factor GTPase family. LepA subfamily.

Its subcellular location is the cell inner membrane. The enzyme catalyses GTP + H2O = GDP + phosphate + H(+). Functionally, required for accurate and efficient protein synthesis under certain stress conditions. May act as a fidelity factor of the translation reaction, by catalyzing a one-codon backward translocation of tRNAs on improperly translocated ribosomes. Back-translocation proceeds from a post-translocation (POST) complex to a pre-translocation (PRE) complex, thus giving elongation factor G a second chance to translocate the tRNAs correctly. Binds to ribosomes in a GTP-dependent manner. This Rhizobium etli (strain CIAT 652) protein is Elongation factor 4.